A 406-amino-acid polypeptide reads, in one-letter code: Bifunctional enzyme Fae/Hps (406 aa).

Residues 1–164 (MSDIYEIGEA…AEKDRGTHPI (164 aa)) form a formaldehyde-activating enzyme region. The Proton donor role is filled by His20. Residues Asp22, Leu51, Lys69, Thr71, and Gln86 each coordinate substrate. Residues 165 to 406 (MGFKAMKLWN…RLALDEDEKI (242 aa)) are 3-hexulose-6-phosphate synthase.

In the N-terminal section; belongs to the formaldehyde-activating enzyme family. It in the C-terminal section; belongs to the HPS/KGPDC family. HPS subfamily.

It carries out the reaction 5,6,7,8-tetrahydromethanopterin + formaldehyde = 5,10-methylenetetrahydromethanopterin + H2O. It catalyses the reaction D-ribulose 5-phosphate + formaldehyde = D-arabino-hex-3-ulose 6-phosphate. It participates in carbohydrate biosynthesis; D-ribose 5-phosphate biosynthesis. In terms of biological role, catalyzes the condensation of formaldehyde with tetrahydromethanopterin (H(4)MPT) to 5,10-methylenetetrahydromethanopterin. Its function is as follows. Catalyzes the reversible formation of ribulose-5-phosphate and formaldehyde from 3-hexulose-6-phosphate. The protein is Bifunctional enzyme Fae/Hps of Methanosphaera stadtmanae (strain ATCC 43021 / DSM 3091 / JCM 11832 / MCB-3).